The chain runs to 512 residues: Solute carrier family 40 member 2 (512 aa).

The segment at 1 to 28 (MEEETETRVFLSNEQHQEEEEEEEEEPS) is disordered. The span at 17–27 (QEEEEEEEEEP) shows a compositional bias: acidic residues. The next 11 membrane-spanning stretches (helical) occupy residues 55–75 (VALY…MYGV), 105–125 (LVTQ…LLVV), 133–153 (FPVF…GVLS), 187–207 (GIDL…ISFV), 214–234 (ITFA…FISV), 310–330 (IVLP…FGTL), 343–363 (YIIG…TVLY), 376–396 (GVWS…SIWV), 405–425 (MLMA…LAVI), 442–462 (GVQN…GIIV), and 468–488 (FWML…LYTI).

Belongs to the ferroportin (FP) (TC 2.A.100) family. SLC40A subfamily.

It localises to the vacuole membrane. In terms of biological role, vacuolar transporter that is involved in the transport of excess nickel into the vacuole under iron deficiency, increasing cellular tolerance to nickel under iron deficiency stress response. This Arabidopsis thaliana (Mouse-ear cress) protein is Solute carrier family 40 member 2 (IREG2).